Consider the following 213-residue polypeptide: MMKMNRYALVAALAIFLSGCVGQREPAPVDEVKPAPEQPAEPQQPVPVVPSVPTIPQQPGPIEHEDQTAQPAPRVRHYDWNSAMQPMVGKMLQADGVTAGNVLLVDSVNNRTNGSLNAGEATETLRNALANNGKFTLVSAQQLAMAKQQLGLSPQDSLGTRSKAIGIARNVGAQYVLYSSAAGNVNAPSLQMQLMLVQTGEIIWSGKGAVQQQ.

The first 19 residues, 1 to 19 (MMKMNRYALVAALAIFLSG), serve as a signal peptide directing secretion. Cys20 carries N-palmitoyl cysteine lipidation. Cys20 carries S-diacylglycerol cysteine lipidation. The interval 26 to 71 (PAPVDEVKPAPEQPAEPQQPVPVVPSVPTIPQQPGPIEHEDQTAQP) is disordered. Positions 36–50 (PEQPAEPQQPVPVVP) are enriched in pro residues.

It belongs to the LpoB family. In terms of assembly, interacts with PBP1b.

Its subcellular location is the cell outer membrane. Its function is as follows. Regulator of peptidoglycan synthesis that is essential for the function of penicillin-binding protein 1B (PBP1b). In Citrobacter koseri (strain ATCC BAA-895 / CDC 4225-83 / SGSC4696), this protein is Penicillin-binding protein activator LpoB.